A 198-amino-acid polypeptide reads, in one-letter code: Probable chemoreceptor glutamine deamidase CheD (198 aa).

The protein belongs to the CheD family.

It catalyses the reaction L-glutaminyl-[protein] + H2O = L-glutamyl-[protein] + NH4(+). In terms of biological role, probably deamidates glutamine residues to glutamate on methyl-accepting chemotaxis receptors (MCPs), playing an important role in chemotaxis. The polypeptide is Probable chemoreceptor glutamine deamidase CheD (Stenotrophomonas maltophilia (strain R551-3)).